A 338-amino-acid chain; its full sequence is Deoxyhypusine hydroxylase (338 aa).

HEAT-like PBS-type repeat units follow at residues 71-97, 104-130, 200-233, 238-264, and 271-298; these read LKHE…VLKD, CRHE…LKDD, QRYR…GLKD, FRHE…CLSN, and VRHE…FLND. Fe cation contacts are provided by H73, E74, H106, and E107. H240, E241, H273, and E274 together coordinate Fe cation.

Belongs to the deoxyhypusine hydroxylase family. Fe(2+) is required as a cofactor.

Its subcellular location is the cytoplasm. The protein resides in the nucleus. The enzyme catalyses [eIF5A protein]-deoxyhypusine + AH2 + O2 = [eIF5A protein]-hypusine + A + H2O. Its pathway is protein modification; eIF5A hypusination. Its function is as follows. Catalyzes the hydroxylation of the N(6)-(4-aminobutyl)-L-lysine intermediate to form hypusine, an essential post-translational modification only found in mature eIF-5A factor. The sequence is that of Deoxyhypusine hydroxylase (lia1) from Aspergillus niger (strain ATCC MYA-4892 / CBS 513.88 / FGSC A1513).